The chain runs to 79 residues: Acyl carrier protein (79 aa).

In terms of domain architecture, Carrier spans 3-78 (QEILEKVCSI…DAVKFIEEKK (76 aa)). Ser-38 is subject to O-(pantetheine 4'-phosphoryl)serine.

The protein belongs to the acyl carrier protein (ACP) family. 4'-phosphopantetheine is transferred from CoA to a specific serine of apo-ACP by AcpS. This modification is essential for activity because fatty acids are bound in thioester linkage to the sulfhydryl of the prosthetic group.

It is found in the cytoplasm. It functions in the pathway lipid metabolism; fatty acid biosynthesis. In terms of biological role, carrier of the growing fatty acid chain in fatty acid biosynthesis. The chain is Acyl carrier protein from Prochlorococcus marinus (strain MIT 9301).